The chain runs to 103 residues: Small ribosomal subunit protein uS10 (103 aa).

Belongs to the universal ribosomal protein uS10 family. As to quaternary structure, part of the 30S ribosomal subunit.

In terms of biological role, involved in the binding of tRNA to the ribosomes. This is Small ribosomal subunit protein uS10 from Pseudomonas savastanoi pv. phaseolicola (strain 1448A / Race 6) (Pseudomonas syringae pv. phaseolicola (strain 1448A / Race 6)).